Here is a 444-residue protein sequence, read N- to C-terminus: Protein-serine O-palmitoleoyltransferase porcupine (444 aa).

The next 10 helical transmembrane spans lie at 29–49 (NGTL…FLVW), 81–101 (VMIF…KLNG), 128–150 (FLTL…FAIV), 163–183 (TLYL…YVTF), 201–221 (LGVF…AIIS), 249–269 (YFIC…IVVA), 304–324 (FFQS…LLHA), 326–346 (DYQM…ETVF), 383–403 (VLII…FTGM), and 420–440 (WTIW…FLAL). Residue His323 is part of the active site.

It belongs to the membrane-bound acyltransferase family. Porcupine subfamily.

The protein resides in the membrane. It carries out the reaction [Wnt protein]-L-serine + (9Z)-hexadecenoyl-CoA = [Wnt protein]-O-(9Z)-hexadecenoyl-L-serine + CoA. Functionally, key regulator of the Wnt signaling pathway that mediates lipid modification of Wnt proteins. Acts as a protein-serine O-palmitoleoyltransferase that catalyzes the attachment of palmitoleate, a 16-carbon monounsaturated fatty acid (C16:1(9Z)), to Wnt proteins. Serine palmitoleoylation of WNT proteins is required for efficient binding to frizzled receptors. Has a role in cell specification, specifically in blastomere signaling. Involved in cytosketetal polarity. Required for the orientation of mitotic spindle axis. This chain is Protein-serine O-palmitoleoyltransferase porcupine, found in Caenorhabditis briggsae.